Consider the following 332-residue polypeptide: Glycerol-3-phosphate dehydrogenase [NAD(P)+] (332 aa).

NADPH is bound by residues Trp13, Lys34, and Lys108. Sn-glycerol 3-phosphate contacts are provided by Lys108, Gly136, and Ser138. Residue Ala140 coordinates NADPH. Sn-glycerol 3-phosphate-binding residues include Lys191, Asp244, Ser254, Arg255, and Asn256. Catalysis depends on Lys191, which acts as the Proton acceptor. NADPH is bound at residue Arg255. Val279 and Glu281 together coordinate NADPH.

The protein belongs to the NAD-dependent glycerol-3-phosphate dehydrogenase family.

It localises to the cytoplasm. It carries out the reaction sn-glycerol 3-phosphate + NAD(+) = dihydroxyacetone phosphate + NADH + H(+). It catalyses the reaction sn-glycerol 3-phosphate + NADP(+) = dihydroxyacetone phosphate + NADPH + H(+). Its pathway is membrane lipid metabolism; glycerophospholipid metabolism. Catalyzes the reduction of the glycolytic intermediate dihydroxyacetone phosphate (DHAP) to sn-glycerol 3-phosphate (G3P), the key precursor for phospholipid synthesis. In Francisella tularensis subsp. mediasiatica (strain FSC147), this protein is Glycerol-3-phosphate dehydrogenase [NAD(P)+].